A 312-amino-acid chain; its full sequence is DNA-directed RNA polymerase subunit alpha (312 aa).

An alpha N-terminal domain (alpha-NTD) region spans residues 1-226 (MIEFEKPTIT…EHLGLFTDLT (226 aa)). The interval 242–312 (SDDRMLDRTI…DLGLGLKKDK (71 aa)) is alpha C-terminal domain (alpha-CTD).

It belongs to the RNA polymerase alpha chain family. As to quaternary structure, homodimer. The RNAP catalytic core consists of 2 alpha, 1 beta, 1 beta' and 1 omega subunit. When a sigma factor is associated with the core the holoenzyme is formed, which can initiate transcription.

It carries out the reaction RNA(n) + a ribonucleoside 5'-triphosphate = RNA(n+1) + diphosphate. Functionally, DNA-dependent RNA polymerase catalyzes the transcription of DNA into RNA using the four ribonucleoside triphosphates as substrates. This is DNA-directed RNA polymerase subunit alpha from Streptococcus suis (strain 98HAH33).